The chain runs to 109 residues: uncharacterized protein (109 aa).

The N-terminal stretch at 1 to 19 (MKKFALLAGLFVFAPMTWA) is a signal peptide.

This is an uncharacterized protein from Escherichia coli O6:H1 (strain CFT073 / ATCC 700928 / UPEC).